Consider the following 565-residue polypeptide: Frizzled-2 (565 aa).

A signal peptide spans 1 to 23 (MRPRSALPRLLLPLLLLPAAGPA). At 24-247 (QFHGEKGISI…QEETRFARLW (224 aa)) the chain is on the extracellular side. The FZ domain occupies 34–153 (PDHGFCQPIS…HGAEQICVGQ (120 aa)). 5 cysteine pairs are disulfide-bonded: C39–C100, C47–C93, C84–C121, C110–C150, and C114–C138. Residue N53 is glycosylated (N-linked (GlcNAc...) asparagine). N154 carries N-linked (GlcNAc...) asparagine glycosylation. The tract at residues 160–189 (APALLTTAPPPGLQPGAGGTPGGPGGGGAP) is disordered. Residues 174–188 (PGAGGTPGGPGGGGA) show a composition bias toward gly residues. The chain crosses the membrane as a helical span at residues 248-268 (ILTWSVLCCASTFFTVTTYLV). The Cytoplasmic segment spans residues 269 to 279 (DMQRFRYPERP). The helical transmembrane segment at 280–300 (IIFLSGCYTMVSVAYIAGFVL) threads the bilayer. At 301–327 (QERVVCNERFSEDGYRTVVQGTKKEGC) the chain is on the extracellular side. Residues 328–348 (TILFMMLYFFSMASSIWWVIL) traverse the membrane as a helical segment. The Cytoplasmic segment spans residues 349–370 (SLTWFLAAGMKWGHEAIEANSQ). Residues 371–391 (YFHLAAWAVPAVKTITILAMG) form a helical membrane-spanning segment. Topologically, residues 392–414 (QIDGDLLSGVCFVGLNSLDPLRG) are extracellular. A helical transmembrane segment spans residues 415-435 (FVLAPLFVYLFIGTSFLLAGF). Residues 436 to 461 (VSLFRIRTIMKHDGTKTEKLERLMVR) lie on the Cytoplasmic side of the membrane. A helical transmembrane segment spans residues 462–482 (IGVFSVLYTVPATIVIACYFY). Residues 483 to 519 (EQAFREHWERSWVSQHCKSLAIPCPAHYTPRMSPDFT) are Extracellular-facing. Residues 520–540 (VYMIKYLMTLIVGITSGFWIW) form a helical membrane-spanning segment. At 541–565 (SGKTLHSWRKFYTRLTNSRHGETTV) the chain is on the cytoplasmic side. The Lys-Thr-X-X-X-Trp motif, mediates interaction with the PDZ domain of Dvl family members signature appears at 543–548 (KTLHSW). A PDZ-binding motif is present at residues 563–565 (TTV).

Belongs to the G-protein coupled receptor Fz/Smo family. As to quaternary structure, (Microbial infection) Interacts with C.difficile toxin TcdB; frizzled receptors constitute the major host receptors for TcdB in the colonic epithelium. Post-translationally, ubiquitinated by ZNRF3, leading to its degradation by the proteasome. As to expression, widely expressed. In the adult, mainly found in heart, placenta, skeletal muscle, lung, kidney, pancreas, prostate, testis, ovary and colon. In the fetus, expressed in brain, lung and kidney. Low levels in fetal liver.

It localises to the membrane. Its subcellular location is the cell membrane. In terms of biological role, receptor for Wnt proteins. Most of frizzled receptors are coupled to the beta-catenin canonical signaling pathway, which leads to the activation of disheveled proteins, inhibition of GSK-3 kinase, nuclear accumulation of beta-catenin and activation of Wnt target genes. A second signaling pathway involving PKC and calcium fluxes has been seen for some family members, but it is not yet clear if it represents a distinct pathway or if it can be integrated in the canonical pathway, as PKC seems to be required for Wnt-mediated inactivation of GSK-3 kinase. Both pathways seem to involve interactions with G-proteins. May be involved in transduction and intercellular transmission of polarity information during tissue morphogenesis and/or in differentiated tissues. (Microbial infection) Acts as a receptor for C.difficile toxin TcdB in the colonic epithelium. TcdB occupies the binding site for Wnt-adducted palmitoleate in frizzled receptors and TcdB-binding prevents Wnt-binding and downstream Wnt signaling. This chain is Frizzled-2 (FZD2), found in Homo sapiens (Human).